We begin with the raw amino-acid sequence, 333 residues long: Adenosine deaminase (333 aa).

Residues His12 and His14 each contribute to the Zn(2+) site. His14, Asp16, and Gly170 together coordinate substrate. His197 serves as a coordination point for Zn(2+). Glu200 (proton donor) is an active-site residue. Asp278 serves as a coordination point for Zn(2+). Residue Asp279 participates in substrate binding.

It belongs to the metallo-dependent hydrolases superfamily. Adenosine and AMP deaminases family. Adenosine deaminase subfamily. Requires Zn(2+) as cofactor.

The enzyme catalyses adenosine + H2O + H(+) = inosine + NH4(+). It catalyses the reaction 2'-deoxyadenosine + H2O + H(+) = 2'-deoxyinosine + NH4(+). Catalyzes the hydrolytic deamination of adenosine and 2-deoxyadenosine. This is Adenosine deaminase from Salmonella agona (strain SL483).